Reading from the N-terminus, the 96-residue chain is MSAVLSTENGLILKLYIQPKASRDQIVGLHGDELKVAITAPPVDGQANAHLVKFIAKQFRVAKSQVIIEKGELGRHKQIKVINPQQIPPEVTILLK.

It belongs to the UPF0235 family.

This is UPF0235 protein YpsIP31758_0827 from Yersinia pseudotuberculosis serotype O:1b (strain IP 31758).